We begin with the raw amino-acid sequence, 156 residues long: Large ribosomal subunit protein bL9 (156 aa).

It belongs to the bacterial ribosomal protein bL9 family.

Its function is as follows. Binds to the 23S rRNA. This is Large ribosomal subunit protein bL9 from Treponema pallidum (strain Nichols).